The primary structure comprises 409 residues: tRNA (guanine-N(7)-)-methyltransferase non-catalytic subunit wuho (409 aa).

Positions 48 to 72 (DADSDSDEESTQQPQKPPTNGNGTA) are disordered. A compositionally biased stretch (polar residues) spans 58–72 (TQQPQKPPTNGNGTA). WD repeat units follow at residues 72–111 (ADNVQIVALEVHEGKSLLAVATSDKSLFLFAIDPEGDETN), 122–161 (MVSRTSSCMKFAASGKFLVVCDKGGDCYRYDCDDDDCKKP), 167–206 (GHMSQVLDVLVPDNERFIITSDRDEKIRVTNHPDCHSIET), and 210–252 (GHGE…EVAR).

This sequence belongs to the WD repeat TRM82 family. As to quaternary structure, forms a heterodimer with the catalytic subunit.

It localises to the nucleus. The protein operates within tRNA modification; N(7)-methylguanine-tRNA biosynthesis. Functionally, required for the formation of N(7)-methylguanine at position 46 (m7G46) in tRNA. In the complex, it is required to stabilize and induce conformational changes of the catalytic subunit. The protein is tRNA (guanine-N(7)-)-methyltransferase non-catalytic subunit wuho of Aedes aegypti (Yellowfever mosquito).